The chain runs to 315 residues: MVKTNISKNSPKEATVPELDWPFKLIKSHLETRKLETENVWIACFEPKYASKVTQYVKQIRSKQKESLLHCNRLRRIQDENGSLELQIIICPEKSMTANEIGKDFEDLGIVSKMIFLYAVPAFPPLTDEQFHEWNSVWPVSYRKHVQRQDVFTVHELKRIESILEDLINAAGASHKHGEIGCAAAIYDPTTDTVLAVSVDERSKLKNPINHCVMNAINLVAKRELSRRQNRTDGSKDRYLCKDLTVVMTHEPCVMCSMGLLHSRIRRLIYCKKQPLTGGIESLYGIHWRAELNHRYLAYSGWNKPVPSIKENIHV.

Residues 158-299 enclose the CMP/dCMP-type deaminase domain; it reads KRIESILEDL…AELNHRYLAY (142 aa). Positions 211, 253, and 256 each coordinate Zn(2+).

This sequence belongs to the cytidine and deoxycytidylate deaminase family. ADAT3 subfamily. Heterodimer with Tad2.

The protein resides in the cytoplasm. The protein localises to the nucleus. In terms of biological role, structural subunit of tRNA-specific adenosine deaminase, which deaminates adenosine-34 (the first, also called wobble position of the anticodon) to inosine in many tRNAs. Inosine-34 allows the decoding of 3 different nucleotides at the third position of mRNA codons, as inosine is able to pair with U, C, and A. The wobble inosine tRNA modification is essential for cell cycle progression in the G1/S and G2/M transitions in fission yeast. The protein is tRNA-specific adenosine deaminase subunit tad3 (tad3) of Schizosaccharomyces pombe (strain 972 / ATCC 24843) (Fission yeast).